The following is a 158-amino-acid chain: Transcription elongation factor GreA (158 aa).

A coiled-coil region spans residues 47–74 (NSEYDEAKNEQAFTEGRIIQLENMLKNA).

It belongs to the GreA/GreB family.

Necessary for efficient RNA polymerase transcription elongation past template-encoded arresting sites. The arresting sites in DNA have the property of trapping a certain fraction of elongating RNA polymerases that pass through, resulting in locked ternary complexes. Cleavage of the nascent transcript by cleavage factors such as GreA or GreB allows the resumption of elongation from the new 3'terminus. GreA releases sequences of 2 to 3 nucleotides. This is Transcription elongation factor GreA from Clostridium perfringens (strain ATCC 13124 / DSM 756 / JCM 1290 / NCIMB 6125 / NCTC 8237 / Type A).